A 463-amino-acid chain; its full sequence is Ribosomal protein uS12 methylthiotransferase RimO (463 aa).

The region spanning 15-130 (PKVGMVSLGC…VMQVVHSHLP (116 aa)) is the MTTase N-terminal domain. [4Fe-4S] cluster-binding residues include Cys-24, Cys-60, Cys-89, Cys-161, Cys-165, and Cys-168. One can recognise a Radical SAM core domain in the interval 147–392 (LTPRHYAYLK…MEVAEEVSAA (246 aa)). The region spanning 395-463 (ERKVGKTLKV…ADGHDLWGEV (69 aa)) is the TRAM domain.

This sequence belongs to the methylthiotransferase family. RimO subfamily. Requires [4Fe-4S] cluster as cofactor.

Its subcellular location is the cytoplasm. It catalyses the reaction L-aspartate(89)-[ribosomal protein uS12]-hydrogen + (sulfur carrier)-SH + AH2 + 2 S-adenosyl-L-methionine = 3-methylsulfanyl-L-aspartate(89)-[ribosomal protein uS12]-hydrogen + (sulfur carrier)-H + 5'-deoxyadenosine + L-methionine + A + S-adenosyl-L-homocysteine + 2 H(+). Functionally, catalyzes the methylthiolation of an aspartic acid residue of ribosomal protein uS12. This chain is Ribosomal protein uS12 methylthiotransferase RimO, found in Burkholderia thailandensis (strain ATCC 700388 / DSM 13276 / CCUG 48851 / CIP 106301 / E264).